The primary structure comprises 290 residues: 4-hydroxybenzoate octaprenyltransferase (290 aa).

A run of 9 helical transmembrane segments spans residues 20-40 (IGIL…AEGV), 43-63 (LDIL…GCVV), 92-112 (EALL…QPLN), 114-131 (LTIE…SYPF), 135-155 (FFAM…PMAF), 160-180 (GEVP…VIAY), 209-229 (VVGV…IGLL), 231-251 (NLGV…LYQY), and 266-286 (FLHN…DYLV).

Belongs to the UbiA prenyltransferase family. Mg(2+) serves as cofactor.

It is found in the cell inner membrane. The catalysed reaction is all-trans-octaprenyl diphosphate + 4-hydroxybenzoate = 4-hydroxy-3-(all-trans-octaprenyl)benzoate + diphosphate. Its pathway is cofactor biosynthesis; ubiquinone biosynthesis. Its function is as follows. Catalyzes the prenylation of para-hydroxybenzoate (PHB) with an all-trans polyprenyl group. Mediates the second step in the final reaction sequence of ubiquinone-8 (UQ-8) biosynthesis, which is the condensation of the polyisoprenoid side chain with PHB, generating the first membrane-bound Q intermediate 3-octaprenyl-4-hydroxybenzoate. The polypeptide is 4-hydroxybenzoate octaprenyltransferase (Nitrosospira multiformis (strain ATCC 25196 / NCIMB 11849 / C 71)).